The following is a 299-amino-acid chain: Non-structural protein V (299 aa).

A disordered region spans residues 40–94 (SDNPGQDRATCKEEEAGSSGLSKPCLSAIGSTEGGAPRIRGQGSGESDDDAETLG). The segment at 110 to 120 (YHVYDHSGEAV) is interaction with host STAT1. A compositionally biased stretch (low complexity) spans 133–143 (SGLDGDSTLSG). 2 disordered regions span residues 133 to 168 (SGLDGDSTLSGGDDESENSDVDIGEPDTEGYAITDR) and 204 to 229 (PKLGKTLNVPPPPNPSRASTSETPIK). The segment covering 144-160 (GDDESENSDVDIGEPDT) has biased composition (acidic residues). Zn(2+) contacts are provided by His-232, Cys-251, Cys-255, Cys-267, Cys-269, Cys-272, Cys-276, and Cys-279.

Belongs to the paramyxoviruses V protein family. As to quaternary structure, interacts with host IFIH1/MDA5 and DHX58/LGP2; these interactions are involved in the inhibition of the host type I interferon signaling pathway. Interacts with host TYK2; this interaction inhibits the type I interferon signaling pathway without affecting the type II pathway. Interacts with host IRF7; this interaction inhibits IRF7 translocation to the nucleus. Interacts with host CHUK. Interacts with host RELA/p65; this interaction inhibits the nuclear translocation of NF-KappaB. Interacts (via N-terminus) with host STAT1 and JAK1; these interactions inhibit STAT1 phosphorylation by Jak1 and thereby the type I interferon signaling pathway. Interacts (via C-terminus) with host STAT2; this interaction is involved in the inhibition of the host type I interferon signaling pathway. Forms a complex with host PPP1CA and PPP1CC; this interaction prevents dephosphorylation of host IFIH1/MDA5 and leads to the inhibition of the host type I interferon signaling pathway. Interacts with host IRF9; this interaction prevents the binding of IRF9 to STAT2 and thereby the type I interferon signaling pathway. Interacts with host RIGI regulatory protein (via CARDs domain) and host TRIM25 (via SPRY domain); these interactions prevent TRIM25-mediated ubiquitination of RIG-I and disrupts downstream RIG-I signaling.

It localises to the host cytoplasm. Functionally, plays an essential role in the inhibition of host immune response. Prevents the establishment of cellular antiviral state by blocking interferon-alpha/beta (IFN-alpha/beta) production and signaling pathway. Interacts with host IFIH1/MDA5 and DHX58/LGP2 to inhibit the transduction pathway involved in the activation of IFN-beta promoter, thus protecting the virus against cell antiviral state. Blocks the type I interferon signaling pathway by interacting with host TYK2 and thereby inhibiting downstream STAT1 and STAT2 phosphorylation. Blocks the type I interferon signaling pathway by disrupting the RIG-I signaling pathway. Moderately affects the type II interferon signaling. Prevents PP1alpha/gamma-mediated dephosphorylation of host IFIH1/MDA5 and thus blocks its activation. This Homo sapiens (Human) protein is Non-structural protein V (P/V).